The following is an 87-amino-acid chain: MANIKSAKKRALQSEKRRQHNASRRSMTRTYLKKVIAAIASGDKAAATAAFAVAQPIMDRMATKGLIHKNKAARHKSRLSAQIKAMA.

Residues 1–27 (MANIKSAKKRALQSEKRRQHNASRRSM) form a disordered region.

It belongs to the bacterial ribosomal protein bS20 family.

Binds directly to 16S ribosomal RNA. The protein is Small ribosomal subunit protein bS20 of Aeromonas hydrophila subsp. hydrophila (strain ATCC 7966 / DSM 30187 / BCRC 13018 / CCUG 14551 / JCM 1027 / KCTC 2358 / NCIMB 9240 / NCTC 8049).